The primary structure comprises 355 residues: Protein RecA (355 aa).

67 to 74 contributes to the ATP binding site; the sequence is GPESSGKT.

It belongs to the RecA family.

It is found in the cytoplasm. In terms of biological role, can catalyze the hydrolysis of ATP in the presence of single-stranded DNA, the ATP-dependent uptake of single-stranded DNA by duplex DNA, and the ATP-dependent hybridization of homologous single-stranded DNAs. It interacts with LexA causing its activation and leading to its autocatalytic cleavage. The sequence is that of Protein RecA from Shewanella piezotolerans (strain WP3 / JCM 13877).